The primary structure comprises 202 residues: Glycerol-3-phosphate acyltransferase (202 aa).

The next 4 helical transmembrane spans lie at 2–22 (ANLL…AVVV), 80–100 (LNET…LFPV), 119–139 (AIDP…AFFF), and 158–178 (VLMN…VLLI).

The protein belongs to the PlsY family. In terms of assembly, probably interacts with PlsX.

It is found in the cell inner membrane. The catalysed reaction is an acyl phosphate + sn-glycerol 3-phosphate = a 1-acyl-sn-glycero-3-phosphate + phosphate. It participates in lipid metabolism; phospholipid metabolism. In terms of biological role, catalyzes the transfer of an acyl group from acyl-phosphate (acyl-PO(4)) to glycerol-3-phosphate (G3P) to form lysophosphatidic acid (LPA). This enzyme utilizes acyl-phosphate as fatty acyl donor, but not acyl-CoA or acyl-ACP. The chain is Glycerol-3-phosphate acyltransferase from Cupriavidus necator (strain ATCC 17699 / DSM 428 / KCTC 22496 / NCIMB 10442 / H16 / Stanier 337) (Ralstonia eutropha).